Consider the following 624-residue polypeptide: uncharacterized protein (624 aa).

Positions 108–138 (PTAWSGMESDSTASERSLPQRTDTTSVSSQY) are disordered. Serine 112 is modified (phosphoserine). A compositionally biased stretch (polar residues) spans 115–138 (ESDSTASERSLPQRTDTTSVSSQY). A Phosphoserine modification is found at serine 205. 2 disordered regions span residues 217–236 (LMES…PGTR) and 305–329 (KREC…PVSE).

This is an uncharacterized protein from Rattus norvegicus (Rat).